Reading from the N-terminus, the 140-residue chain is Translation initiation factor 2 subunit beta (140 aa).

It belongs to the eIF-2-beta/eIF-5 family. In terms of assembly, heterotrimer composed of an alpha, a beta and a gamma chain.

Functionally, eIF-2 functions in the early steps of protein synthesis by forming a ternary complex with GTP and initiator tRNA. The chain is Translation initiation factor 2 subunit beta from Metallosphaera sedula (strain ATCC 51363 / DSM 5348 / JCM 9185 / NBRC 15509 / TH2).